A 134-amino-acid chain; its full sequence is ATP synthase epsilon chain (134 aa).

Belongs to the ATPase epsilon chain family. F-type ATPases have 2 components, CF(1) - the catalytic core - and CF(0) - the membrane proton channel. CF(1) has five subunits: alpha(3), beta(3), gamma(1), delta(1), epsilon(1). CF(0) has three main subunits: a, b and c.

It localises to the cell membrane. In terms of biological role, produces ATP from ADP in the presence of a proton gradient across the membrane. The chain is ATP synthase epsilon chain from Ruminiclostridium cellulolyticum (strain ATCC 35319 / DSM 5812 / JCM 6584 / H10) (Clostridium cellulolyticum).